A 456-amino-acid chain; its full sequence is Methylenetetrahydrofolate--tRNA-(uracil-5-)-methyltransferase TrmFO (456 aa).

11–16 (GGGLAG) contacts FAD.

It belongs to the MnmG family. TrmFO subfamily. FAD is required as a cofactor.

The protein resides in the cytoplasm. The catalysed reaction is uridine(54) in tRNA + (6R)-5,10-methylene-5,6,7,8-tetrahydrofolate + NADH + H(+) = 5-methyluridine(54) in tRNA + (6S)-5,6,7,8-tetrahydrofolate + NAD(+). It catalyses the reaction uridine(54) in tRNA + (6R)-5,10-methylene-5,6,7,8-tetrahydrofolate + NADPH + H(+) = 5-methyluridine(54) in tRNA + (6S)-5,6,7,8-tetrahydrofolate + NADP(+). Catalyzes the folate-dependent formation of 5-methyl-uridine at position 54 (M-5-U54) in all tRNAs. In Synechocystis sp. (strain ATCC 27184 / PCC 6803 / Kazusa), this protein is Methylenetetrahydrofolate--tRNA-(uracil-5-)-methyltransferase TrmFO.